The chain runs to 128 residues: uncharacterized protein (128 aa).

Disordered stretches follow at residues 62–83 and 101–128; these read LNPS…SPRV and FAAS…RYQP. A compositionally biased stretch (low complexity) spans 101-114; sequence FAASSSSTAPVTVT.

The protein localises to the cytoplasm. The protein resides in the nucleus. This is an uncharacterized protein from Saccharomyces cerevisiae (strain ATCC 204508 / S288c) (Baker's yeast).